The following is a 158-amino-acid chain: Nuclear cap-binding protein subunit 2 (158 aa).

Residues Tyr-17, Tyr-40, 109 to 113, 120 to 124, and 130 to 131 each bind mRNA; these read RADWD, RQYGR, and QV. Positions 37–115 constitute an RRM domain; that stretch reads CTLYVGNLSY…RVIRADWDAG (79 aa). A disordered region spans residues 123 to 158; sequence GRGKHGGQVRDEYRKDYDPERGGYNRAIAQKGGDRQ. The span at 130–145 shows a compositional bias: basic and acidic residues; that stretch reads QVRDEYRKDYDPERGG.

This sequence belongs to the RRM NCBP2 family. In terms of assembly, component of the nuclear cap-binding complex (CBC), a heterodimer composed of ncbp-1 and ncbp-2 that interacts with m7GpppG-capped RNA.

It localises to the nucleus. Its function is as follows. Component of the cap-binding complex (CBC), which binds co-transcriptionally to the 5' cap of pre-mRNAs and is involved in various processes such as pre-mRNA splicing and RNA-mediated gene silencing (RNAi). The CBC complex is involved in miRNA-mediated RNA interference and is required for primary microRNAs (miRNAs) processing. In the CBC complex, ncbp-2 recognizes and binds capped RNAs (m7GpppG-capped RNA) but requires ncbp-1 to stabilize the movement of its N-terminal loop and lock the CBC into a high affinity cap-binding state with the cap structure. This chain is Nuclear cap-binding protein subunit 2 (ncbp-2), found in Caenorhabditis elegans.